The sequence spans 360 residues: Phospho-N-acetylmuramoyl-pentapeptide-transferase (360 aa).

Transmembrane regions (helical) follow at residues 21–41, 73–93, 97–117, 134–154, 168–188, 199–219, 239–259, 263–283, 288–308, and 338–358; these read YLTLRAILSTLTALLIAILIG, TMGGLLILAAIVVSGLLWADL, YVLVTLTVVVAYGIIGFVDDY, YFWQSVVALGVAFYLYSSATM, VFPQLGIFFIIITYFAIVGTS, GLAIVPTILVAGAFAIFAYVT, LVIVCTAMVGAGLGFLWFNTY, VFMGDVGSLALGGTLGVLAVL, LVLIIMGGVFVMETLSVILQV, and VIVRFWIISIILVLVGLATLK.

The protein belongs to the glycosyltransferase 4 family. MraY subfamily. It depends on Mg(2+) as a cofactor.

The protein localises to the cell inner membrane. The enzyme catalyses UDP-N-acetyl-alpha-D-muramoyl-L-alanyl-gamma-D-glutamyl-meso-2,6-diaminopimeloyl-D-alanyl-D-alanine + di-trans,octa-cis-undecaprenyl phosphate = di-trans,octa-cis-undecaprenyl diphospho-N-acetyl-alpha-D-muramoyl-L-alanyl-D-glutamyl-meso-2,6-diaminopimeloyl-D-alanyl-D-alanine + UMP. It participates in cell wall biogenesis; peptidoglycan biosynthesis. Its function is as follows. Catalyzes the initial step of the lipid cycle reactions in the biosynthesis of the cell wall peptidoglycan: transfers peptidoglycan precursor phospho-MurNAc-pentapeptide from UDP-MurNAc-pentapeptide onto the lipid carrier undecaprenyl phosphate, yielding undecaprenyl-pyrophosphoryl-MurNAc-pentapeptide, known as lipid I. In Alteromonas mediterranea (strain DSM 17117 / CIP 110805 / LMG 28347 / Deep ecotype), this protein is Phospho-N-acetylmuramoyl-pentapeptide-transferase.